Here is a 483-residue protein sequence, read N- to C-terminus: HSPB1-associated protein 1 (483 aa).

Residues 1–26 (MAAGCEGIAPPTLGERTVGEEGEPVK) are disordered. An interaction with HSPB1 region spans residues 88-208 (ETECSYVDAT…EDTPFLYPTR (121 aa)). Positions 124–288 (WAYADYKYFV…HLARVEEAIT (165 aa)) constitute a JmjC domain. Positions 388–416 (LIPVTPASEERGGALEGDSEESVSSNGGH) are disordered.

Interacts with CRYAB and HSPB1.

The protein resides in the cytoplasm. May play a role in cellular stress response. The sequence is that of HSPB1-associated protein 1 (Hspbap1) from Mus musculus (Mouse).